A 92-amino-acid polypeptide reads, in one-letter code: Small ribosomal subunit protein bS20 (92 aa).

The span at 1-11 (MANIKSQKKRI) shows a compositional bias: basic residues. Positions 1–22 (MANIKSQKKRIRQNEKARLRNK) are disordered.

This sequence belongs to the bacterial ribosomal protein bS20 family.

Functionally, binds directly to 16S ribosomal RNA. The polypeptide is Small ribosomal subunit protein bS20 (Thermobifida fusca (strain YX)).